Here is a 209-residue protein sequence, read N- to C-terminus: ATP-dependent Clp protease proteolytic subunit (209 aa).

The Nucleophile role is filled by Ser113. His138 is a catalytic residue.

The protein belongs to the peptidase S14 family. Fourteen ClpP subunits assemble into 2 heptameric rings which stack back to back to give a disk-like structure with a central cavity, resembling the structure of eukaryotic proteasomes.

It is found in the cytoplasm. The catalysed reaction is Hydrolysis of proteins to small peptides in the presence of ATP and magnesium. alpha-casein is the usual test substrate. In the absence of ATP, only oligopeptides shorter than five residues are hydrolyzed (such as succinyl-Leu-Tyr-|-NHMec, and Leu-Tyr-Leu-|-Tyr-Trp, in which cleavage of the -Tyr-|-Leu- and -Tyr-|-Trp bonds also occurs).. Functionally, cleaves peptides in various proteins in a process that requires ATP hydrolysis. Has a chymotrypsin-like activity. Plays a major role in the degradation of misfolded proteins. The chain is ATP-dependent Clp protease proteolytic subunit from Blochmanniella floridana.